The primary structure comprises 156 residues: Transcription antitermination protein NusB (156 aa).

It belongs to the NusB family.

In terms of biological role, involved in transcription antitermination. Required for transcription of ribosomal RNA (rRNA) genes. Binds specifically to the boxA antiterminator sequence of the ribosomal RNA (rrn) operons. This is Transcription antitermination protein NusB from Mycobacterium tuberculosis (strain CDC 1551 / Oshkosh).